Here is a 287-residue protein sequence, read N- to C-terminus: Cbb3-type cytochrome c oxidase subunit FixPc (287 aa).

Topologically, residues Met-1–Thr-36 are cytoplasmic. A helical transmembrane segment spans residues Phe-37–Ile-57. Residues Thr-58 to Thr-287 lie on the Periplasmic side of the membrane. 2 consecutive Cytochrome c domains span residues Phe-108 to Thr-196 and Gly-203 to Gly-284. Heme c is bound by residues Cys-121, Cys-124, His-125, Met-173, Cys-216, Cys-219, His-220, and Met-261.

The protein belongs to the CcoP / FixP family. In terms of assembly, component of the cbb3-type cytochrome c oxidase at least composed of FixN, FixO, FixQ and FixP. Heme c is required as a cofactor.

It localises to the cell inner membrane. It participates in energy metabolism; oxidative phosphorylation. Functionally, C-type cytochrome. Part of the cbb3-type cytochrome c oxidase complex. FixP subunit is required for transferring electrons from donor cytochrome c via its heme groups to FixO subunit. From there, electrons are shuttled to the catalytic binuclear center of FixN subunit where oxygen reduction takes place. The complex also functions as a proton pump. The protein is Cbb3-type cytochrome c oxidase subunit FixPc of Rhizobium leguminosarum bv. viciae.